Here is a 150-residue protein sequence, read N- to C-terminus: MPHRSRHKRGSSGSVRPATKTIPPWLSYSPEDVERLVVELARRGFTPSLIGVILRDQYGIPLVKIVTNKRITEILEENGLKPQIPEDLMALIRRAVNIRRHLEEHPKDMSAKKGLLLTESKIHRLIKYYKRTGVLPLDFTYSPERFAMAT.

Over residues 1 to 10 (MPHRSRHKRG) the composition is skewed to basic residues. A disordered region spans residues 1-21 (MPHRSRHKRGSSGSVRPATKT).

This sequence belongs to the universal ribosomal protein uS15 family. Part of the 30S ribosomal subunit.

The protein is Small ribosomal subunit protein uS15 of Caldivirga maquilingensis (strain ATCC 700844 / DSM 13496 / JCM 10307 / IC-167).